We begin with the raw amino-acid sequence, 65 residues long: Large ribosomal subunit protein bL35 (65 aa).

The interval 28-53 is disordered; it reads NGSHNLEKKNRKRTRRLHQSTMLDNA. A compositionally biased stretch (basic residues) spans 36–45; sequence KNRKRTRRLH.

It belongs to the bacterial ribosomal protein bL35 family.

In Chlorobium luteolum (strain DSM 273 / BCRC 81028 / 2530) (Pelodictyon luteolum), this protein is Large ribosomal subunit protein bL35.